Reading from the N-terminus, the 382-residue chain is Protein phosphatase 1A (382 aa).

Residue glycine 2 is the site of N-myristoyl glycine attachment. One can recognise a PPM-type phosphatase domain in the interval 23–291 (RYGLSSMQGW…DNMSVILICF (269 aa)). Positions 60, 61, 239, and 282 each coordinate Mn(2+). A phosphoserine mark is found at serine 375 and serine 377.

Belongs to the PP2C family. Monomer. Interacts with SMAD2; the interaction dephosphorylates SMAD2 in its C-terminal SXS motif resulting in disruption of the SMAD2/SMAD4 complex, SMAD2 nuclear export and termination of the TGF-beta-mediated signaling. Interacts with SMAD2; the interaction dephosphorylates SMAD2 in its C-terminal SXS motif resulting in disruption of the SMAD2/SMAD4 complex, SMAD2 nuclear export and termination of the TGF-beta-mediated signaling. Interacts with the phosphorylated form of IKBKB/IKKB. It depends on Mg(2+) as a cofactor. Requires Mn(2+) as cofactor. N-myristoylation is essential for the recognition of its substrates for dephosphorylation.

It localises to the nucleus. Its subcellular location is the cytoplasm. The protein localises to the cytosol. The protein resides in the membrane. The enzyme catalyses O-phospho-L-seryl-[protein] + H2O = L-seryl-[protein] + phosphate. The catalysed reaction is O-phospho-L-threonyl-[protein] + H2O = L-threonyl-[protein] + phosphate. Its function is as follows. Enzyme with a broad specificity. Negatively regulates TGF-beta signaling through dephosphorylating SMAD2 and SMAD3, resulting in their dissociation from SMAD4, nuclear export of the SMADs and termination of the TGF-beta-mediated signaling. Dephosphorylates PRKAA1 and PRKAA2. Plays an important role in the termination of TNF-alpha-mediated NF-kappa-B activation through dephosphorylating and inactivating IKBKB/IKKB. This chain is Protein phosphatase 1A (PPM1A), found in Oryctolagus cuniculus (Rabbit).